Consider the following 424-residue polypeptide: MTAIIDIHGREILDSRGNPTVEVDVLLEDGSFGRAAVPSGASTGAHEAVELRDGDKGRYLGKGVTKAVAAVNGDIAEALVGLDAEDQREIDMAMIDLDGTPNKSRLGANAILGVSLAAAKAAADARGLPLYRYVGGVSARTLPVPMMNIINGGEHADNPIDVQEFMIMPVGAGSIAEAVRWGSEIFHTLKKGLSQKGLATAVGDEGGFAPNLASTRDALDFIAASVDQAGFKLGTDVVLALDCAATEFFRNGKYEISGEGLSLSPEQMAEYLAALVKDYPIKSIEDGMSEDDFAGWKALTDLIGGTCQLVGDDLFVTNPARLEQGIKDGLANSLLVKVNQIGTLSETLDAVDMAHRARYSAVMSHRSGETEDATIADLAVATNCGQIKTGSLARSDRLAKYNQLIRIEEELGDMARYPGAAIFG.

Q163 contacts (2R)-2-phosphoglycerate. E205 serves as the catalytic Proton donor. D242, E285, and D312 together coordinate Mg(2+). Residues K337, R366, S367, and K388 each coordinate (2R)-2-phosphoglycerate. K337 acts as the Proton acceptor in catalysis.

The protein belongs to the enolase family. It depends on Mg(2+) as a cofactor.

The protein resides in the cytoplasm. Its subcellular location is the secreted. It localises to the cell surface. It carries out the reaction (2R)-2-phosphoglycerate = phosphoenolpyruvate + H2O. The protein operates within carbohydrate degradation; glycolysis; pyruvate from D-glyceraldehyde 3-phosphate: step 4/5. Functionally, catalyzes the reversible conversion of 2-phosphoglycerate (2-PG) into phosphoenolpyruvate (PEP). It is essential for the degradation of carbohydrates via glycolysis. The polypeptide is Enolase (Sphingopyxis alaskensis (strain DSM 13593 / LMG 18877 / RB2256) (Sphingomonas alaskensis)).